A 399-amino-acid polypeptide reads, in one-letter code: Tyrosine--tRNA ligase (399 aa).

A 'HIGH' region motif is present at residues 42-51; that stretch reads PTAPDIHLGH. The 'KMSKS' region signature appears at 226–230; the sequence is KMSKS. Lysine 229 contributes to the ATP binding site. Residues 337–398 enclose the S4 RNA-binding domain; sequence LTIGYILQRA…GKRRFAKVKV (62 aa).

The protein belongs to the class-I aminoacyl-tRNA synthetase family. TyrS type 2 subfamily. In terms of assembly, homodimer.

The protein localises to the cytoplasm. The enzyme catalyses tRNA(Tyr) + L-tyrosine + ATP = L-tyrosyl-tRNA(Tyr) + AMP + diphosphate + H(+). Catalyzes the attachment of tyrosine to tRNA(Tyr) in a two-step reaction: tyrosine is first activated by ATP to form Tyr-AMP and then transferred to the acceptor end of tRNA(Tyr). In Coxiella burnetii (strain RSA 493 / Nine Mile phase I), this protein is Tyrosine--tRNA ligase.